Consider the following 137-residue polypeptide: ATP synthase epsilon chain, chloroplastic (137 aa).

The protein belongs to the ATPase epsilon chain family. As to quaternary structure, F-type ATPases have 2 components, CF(1) - the catalytic core - and CF(0) - the membrane proton channel. CF(1) has five subunits: alpha(3), beta(3), gamma(1), delta(1), epsilon(1). CF(0) has three main subunits: a, b and c.

It localises to the plastid. Its subcellular location is the chloroplast thylakoid membrane. Produces ATP from ADP in the presence of a proton gradient across the membrane. In Pinus thunbergii (Japanese black pine), this protein is ATP synthase epsilon chain, chloroplastic.